The sequence spans 736 residues: Elongation factor 2 (736 aa).

The region spanning 18 to 261 is the tr-type G domain; the sequence is EQVRNIGITA…MVVKFIPNPR (244 aa). Residues 27–34, 93–97, and 147–150 contribute to the GTP site; these read AHVDHGKT, DTPGH, and NKVD. His602 is modified (diphthamide).

It belongs to the TRAFAC class translation factor GTPase superfamily. Classic translation factor GTPase family. EF-G/EF-2 subfamily.

It localises to the cytoplasm. Functionally, catalyzes the GTP-dependent ribosomal translocation step during translation elongation. During this step, the ribosome changes from the pre-translocational (PRE) to the post-translocational (POST) state as the newly formed A-site-bound peptidyl-tRNA and P-site-bound deacylated tRNA move to the P and E sites, respectively. Catalyzes the coordinated movement of the two tRNA molecules, the mRNA and conformational changes in the ribosome. This is Elongation factor 2 from Staphylothermus marinus (strain ATCC 43588 / DSM 3639 / JCM 9404 / F1).